The chain runs to 363 residues: tRNA/tmRNA (uracil-C(5))-methyltransferase (363 aa).

Residues glutamine 187, tyrosine 215, asparagine 220, glutamate 236, and aspartate 296 each contribute to the S-adenosyl-L-methionine site. Cysteine 321 serves as the catalytic Nucleophile. Glutamate 355 serves as the catalytic Proton acceptor.

It belongs to the class I-like SAM-binding methyltransferase superfamily. RNA M5U methyltransferase family. TrmA subfamily.

The enzyme catalyses uridine(54) in tRNA + S-adenosyl-L-methionine = 5-methyluridine(54) in tRNA + S-adenosyl-L-homocysteine + H(+). It catalyses the reaction uridine(341) in tmRNA + S-adenosyl-L-methionine = 5-methyluridine(341) in tmRNA + S-adenosyl-L-homocysteine + H(+). Functionally, dual-specificity methyltransferase that catalyzes the formation of 5-methyluridine at position 54 (m5U54) in all tRNAs, and that of position 341 (m5U341) in tmRNA (transfer-mRNA). The sequence is that of tRNA/tmRNA (uracil-C(5))-methyltransferase from Pseudomonas fluorescens.